The chain runs to 335 residues: Serpentine receptor class gamma-11 (335 aa).

A run of 7 helical transmembrane segments spans residues 33 to 53, 66 to 86, 98 to 118, 154 to 174, 202 to 222, 242 to 262, and 271 to 291; these read FLQIAYLIPGGILNILLLYTI, FFLIYSTDCFVSFSMIFLDII, PIIAPMFYEPLIGFKIMMIVL, LKYLIILVFVIPFSIDWNLII, FQLIFITIALLFTIVCTSVIF, GTAYISMSFIILVVFQFLFAF, and TIFGYSLLSYDILNVGSPIIM.

The protein belongs to the nematode receptor-like protein srg family.

Its subcellular location is the membrane. This Caenorhabditis elegans protein is Serpentine receptor class gamma-11 (srg-11).